A 328-amino-acid chain; its full sequence is DNA polymerase III subunit delta' (328 aa).

DNA polymerase III contains a core (composed of alpha, epsilon and theta chains) that associates with a tau subunit. This core dimerizes to form the POLIII' complex. PolIII' associates with the gamma complex (composed of gamma, delta, delta', psi and chi chains) and with the beta chain to form the complete DNA polymerase III complex.

It catalyses the reaction DNA(n) + a 2'-deoxyribonucleoside 5'-triphosphate = DNA(n+1) + diphosphate. Functionally, DNA polymerase III is a complex, multichain enzyme responsible for most of the replicative synthesis in bacteria. This DNA polymerase also exhibits 3' to 5' exonuclease activity. The chain is DNA polymerase III subunit delta' (holB) from Buchnera aphidicola subsp. Schizaphis graminum (strain Sg).